A 151-amino-acid chain; its full sequence is Ribosome maturation factor RimP (151 aa).

Belongs to the RimP family.

Its subcellular location is the cytoplasm. Functionally, required for maturation of 30S ribosomal subunits. The chain is Ribosome maturation factor RimP from Shewanella oneidensis (strain ATCC 700550 / JCM 31522 / CIP 106686 / LMG 19005 / NCIMB 14063 / MR-1).